Reading from the N-terminus, the 240-residue chain is tRNA (guanine-N(1)-)-methyltransferase (240 aa).

S-adenosyl-L-methionine contacts are provided by residues Gly110 and 129–134; that span reads LGDFVL.

This sequence belongs to the RNA methyltransferase TrmD family. As to quaternary structure, homodimer.

The protein resides in the cytoplasm. The catalysed reaction is guanosine(37) in tRNA + S-adenosyl-L-methionine = N(1)-methylguanosine(37) in tRNA + S-adenosyl-L-homocysteine + H(+). Specifically methylates guanosine-37 in various tRNAs. This is tRNA (guanine-N(1)-)-methyltransferase from Clostridium botulinum (strain Kyoto / Type A2).